The sequence spans 182 residues: TTTVQYNPSEQYQPYPEQQEPFVQQQPFVQQQQQPFVQQQQMFLQPLLQQQLNPCKQFLVQQCSPVAVVPFLRSQILRQAICQVARQQCCRQLAQIPEQLRCPAIHSVVQAIILQQQQQQQFFQPQLQQQVFQPQLQQVFNQPQQQAQFEGMRAFALQALPAMCDVYVPPQCPVATAPLGGF.

The 1; approximate repeat unit spans residues 21 to 26 (PFVQQQ). Residues 21–41 (PFVQQQPFVQQQQQPFVQQQQ) form a 3 X 7 AA tandem repeats of P-F-V-Q-Q-Q-Q region. The 2; approximate repeat unit spans residues 27-34 (PFVQQQQQ). Repeat unit 3 spans residues 35–41 (PFVQQQQ).

The protein belongs to the gliadin/glutenin family. In terms of assembly, monomer.

It is found in the vacuole. Its subcellular location is the aleurone grain. Its function is as follows. Seed storage protein. Serves as a source of nitrogen, carbon, and sulfur for the young developing seedling. The sequence is that of Avenin-E from Avena sativa (Oat).